The chain runs to 401 residues: Aspartate aminotransferase, mitochondrial (401 aa).

A Phosphothreonine modification is found at T19. Position 30 is an N6-acetyllysine (K30). G36 serves as a coordination point for substrate. K44 is modified (N6-acetyllysine; alternate). Position 44 is an N6-succinyllysine; alternate (K44). K53 bears the N6-acetyllysine mark. At K61 the chain carries N6-acetyllysine; alternate. Position 61 is an N6-succinyllysine; alternate (K61). A 3'-nitrotyrosine; alternate modification is found at Y67. The residue at position 67 (Y67) is a Phosphotyrosine; alternate. 3 positions are modified to N6-acetyllysine; alternate: K78, K93, and K130. N6-succinyllysine; alternate is present on residues K78, K93, and K130. W133 provides a ligand contact to substrate. K156 carries the N6-acetyllysine; alternate modification. At K156 the chain carries N6-succinyllysine; alternate. N186 serves as a coordination point for substrate. Position 198 is an N6-succinyllysine (K198). K205 bears the N6-acetyllysine mark. K250 and K267 each carry N6-acetyllysine; alternate. At K250 the chain carries N6-(pyridoxal phosphate)lysine; alternate. K267 is subject to N6-succinyllysine; alternate. K273 is modified (N6-acetyllysine). K280 is subject to N6-acetyllysine; alternate. K280 bears the N6-succinyllysine; alternate mark. Position 284 is an asymmetric dimethylarginine (R284). K309 carries the post-translational modification N6-acetyllysine; alternate. K309 bears the N6-succinyllysine; alternate mark. K316 bears the N6-acetyllysine mark. K334 is modified (N6-acetyllysine; alternate). K334 bears the N6-succinyllysine; alternate mark. Residues K335 and K358 each carry the N6-acetyllysine modification. N6-acetyllysine; alternate is present on residues K367 and K375. K367 and K375 each carry N6-succinyllysine; alternate. R378 serves as a coordination point for substrate.

It belongs to the class-I pyridoxal-phosphate-dependent aminotransferase family. Homodimer. Pyridoxal 5'-phosphate serves as cofactor.

It localises to the mitochondrion matrix. It is found in the cell membrane. It carries out the reaction L-aspartate + 2-oxoglutarate = oxaloacetate + L-glutamate. It catalyses the reaction L-kynurenine + 2-oxoglutarate = kynurenate + L-glutamate + H2O. In terms of biological role, catalyzes the irreversible transamination of the L-tryptophan metabolite L-kynurenine to form kynurenic acid (KA). As a member of the malate-aspartate shuttle, it has a key role in the intracellular NAD(H) redox balance. Is important for metabolite exchange between mitochondria and cytosol, and for amino acid metabolism. Facilitates cellular uptake of long-chain free fatty acids. The protein is Aspartate aminotransferase, mitochondrial (GOT2) of Equus caballus (Horse).